A 183-amino-acid chain; its full sequence is Inner membrane protein p54 (183 aa).

Residues 32-52 traverse the membrane as a helical segment; it reads YTILIAIVVLVIIIIVLIYLF. Residues 81 to 157 are disordered; the sequence is EVTPQPGTSK…PYTTVTTQNT (77 aa). A compositionally biased stretch (polar residues) spans 111-122; that stretch reads RPATNKPVTDNP. Positions 130 to 143 are enriched in low complexity; the sequence is ATGGPAAAPAAASA. Positions 149 to 161 are interaction with host DYNLL1; that stretch reads YTTVTTQNTASQT.

This sequence belongs to the asfivirus envelope protein p54 family. As to quaternary structure, interacts with the host light chain cytoplasmic dynein DYNLL1; this interaction is critical for intracellular microtubule-dependent virus transport toward viral factories.

The protein localises to the virion membrane. The protein resides in the host cytoplasm. It localises to the host cytoskeleton. Its subcellular location is the host endoplasmic reticulum membrane. In terms of biological role, inner envelope protein involved, through its interaction with host dynein, in the intracellular microtubule-dependent transport of viral capsid toward viral factories. Seems to induce caspase-3 activation and apoptosis. Plays a role in virion morphogenesis by recruiting and transforming the host ER membranes into the precursors of the viral envelope. Involved in virus attachment to the host cell. This chain is Inner membrane protein p54, found in Ornithodoros (relapsing fever ticks).